The sequence spans 322 residues: MAAAPVLEFERPIADLEKQIEELKRLAADRSLDVAEELAPLQKKLGDLRIQIYQNLSPLQRVQVARMSRRPFTSDYIKHAFSDFIELHGDRLFREDAAIMAGWARLEGETVMLIGHERGRDTKENLKRNFGMPHPEGYRKALRLMKLAEKFQVPVLTFIDTPGAWPGLGAEERGQSEAIARNLLEMSQLQVPIIATIIGEGGSGGALALGVADRVLMFENSVYSTISVEGCAAILWKDGKSQEMREKAATALRVTAADLVELRVIDEVIQEPVGGAHADHAATARALRETLTRNLEELRRLKPDKLVRRRREKFLRMGQFTE.

The region spanning 40–297 (PLQKKLGDLR…RETLTRNLEE (258 aa)) is the CoA carboxyltransferase C-terminal domain.

The protein belongs to the AccA family. As to quaternary structure, acetyl-CoA carboxylase is a heterohexamer composed of biotin carboxyl carrier protein (AccB), biotin carboxylase (AccC) and two subunits each of ACCase subunit alpha (AccA) and ACCase subunit beta (AccD).

Its subcellular location is the cytoplasm. It catalyses the reaction N(6)-carboxybiotinyl-L-lysyl-[protein] + acetyl-CoA = N(6)-biotinyl-L-lysyl-[protein] + malonyl-CoA. The protein operates within lipid metabolism; malonyl-CoA biosynthesis; malonyl-CoA from acetyl-CoA: step 1/1. Its function is as follows. Component of the acetyl coenzyme A carboxylase (ACC) complex. First, biotin carboxylase catalyzes the carboxylation of biotin on its carrier protein (BCCP) and then the CO(2) group is transferred by the carboxyltransferase to acetyl-CoA to form malonyl-CoA. This Gemmatimonas aurantiaca (strain DSM 14586 / JCM 11422 / NBRC 100505 / T-27) protein is Acetyl-coenzyme A carboxylase carboxyl transferase subunit alpha.